We begin with the raw amino-acid sequence, 206 residues long: 2-oxoglutarate-dependent dioxygenase iboH (206 aa).

In terms of domain architecture, Fe2OG dioxygenase spans 51–157 (PSTTTLVLLH…RYSIAYFLRP (107 aa)). Positions 75, 77, and 134 each coordinate Fe cation. Arg-148 is a 2-oxoglutarate binding site.

It belongs to the iron/ascorbate-dependent oxidoreductase family. Fe(2+) is required as a cofactor.

The enzyme catalyses L-glutamate + 2-oxoglutarate + O2 = (3R)-3-hydroxy-L-glutamate + succinate + CO2. The protein operates within secondary metabolite biosynthesis. Functionally, 2-oxoglutarate-dependent dioxygenase; part of the gene cluster that mediates the biosynthesis of the psychoactive metabolites ibotenic acid and muscimol. The first committed step is glutamate hydroxylation by the 2-oxoglutarate-dependent dioxygenase iboH, and the last step is decarboxylation of ibotenic acid to muscimol by the decarboxylase iboD. The order of the intermediate reactions is somewhat ambiguous. IboA likely activates the carboxylic acid at position 5 to introduce an amide bond, and the flavin monooxygenase iboF generates the N-O bond. There are several options for the latter step. One option is that iboF directly hydroxylates the amide nitrogen formed by iboA to produce a hydroxamic acid species. Another option is that iboF hydroxylates an external N-containing compound, whose resulting N-O bond is subsequently introduced into the hydroxyglutamate scaffold. The paralogous PLP-dependent cystathionine gamma-synthase-like enzymes iboG1 and iboG2 are likely involved in substitution of the OH group at position 3 by the O-N moiety. The first cyclic intermediate is most probably tricholomic acid which is likely desaturated to ibotenic acid by the cytochrome P450 monooxygenase iboC. This is 2-oxoglutarate-dependent dioxygenase iboH from Amanita muscaria (strain Koide BX008).